The sequence spans 150 residues: Con-Ins Im1 (150 aa).

The first 25 residues, 1-25, serve as a signal peptide directing secretion; that stretch reads MATSLLSPLLVAMLGFLLHVHVARA. Intrachain disulfides connect C31–C133, C46–C136, C58–C149, and C135–C140. The propeptide at 64 to 111 is c peptide; sequence GYAGGQRQLRKRTSMIDSDDMEAEGGSRGGFLMSKRRALSYLQKETNP. At E144 the chain carries 4-carboxyglutamate; partial.

This sequence belongs to the insulin family. Heterodimer of A and B chains; disulfide-linked. In terms of tissue distribution, expressed by the venom gland.

It localises to the secreted. This venom insulin facilitates prey capture by rapidly inducing hypoglycemic shock. Intraperitoneal injection of this peptide into zebrafish lowers blood glucose with the same potency than human insulin. In vivo, when applied to water, this peptide reduces overall locomotor activity of zebrafish larvae, observed as a significant decrease in the percentage of time spent swimming and movement frequency. In Conus imperialis (Imperial cone), this protein is Con-Ins Im1.